We begin with the raw amino-acid sequence, 302 residues long: Acetaldehyde dehydrogenase (302 aa).

Residue Cys-131 is the Acyl-thioester intermediate of the active site. Residues Ser-162 to Asn-170 and Asn-273 each bind NAD(+).

It belongs to the acetaldehyde dehydrogenase family.

It catalyses the reaction acetaldehyde + NAD(+) + CoA = acetyl-CoA + NADH + H(+). This chain is Acetaldehyde dehydrogenase, found in Acidovorax sp. (strain JS42).